Here is a 485-residue protein sequence, read N- to C-terminus: Ribulose bisphosphate carboxylase large chain (485 aa).

Positions 1–2 (MS) are excised as a propeptide. An N-acetylproline modification is found at proline 3. Residue lysine 14 is modified to N6,N6,N6-trimethyllysine. Substrate-binding residues include asparagine 123 and threonine 173. The active-site Proton acceptor is the lysine 175. Lysine 177 serves as a coordination point for substrate. 3 residues coordinate Mg(2+): lysine 201, aspartate 203, and glutamate 204. Lysine 201 carries the N6-carboxylysine modification. The active-site Proton acceptor is histidine 294. Substrate contacts are provided by arginine 295, histidine 327, and serine 379.

This sequence belongs to the RuBisCO large chain family. Type I subfamily. As to quaternary structure, heterohexadecamer of 8 large chains and 8 small chains; disulfide-linked. The disulfide link is formed within the large subunit homodimers. Mg(2+) serves as cofactor. The disulfide bond which can form in the large chain dimeric partners within the hexadecamer appears to be associated with oxidative stress and protein turnover.

Its subcellular location is the plastid. The protein resides in the chloroplast. It catalyses the reaction 2 (2R)-3-phosphoglycerate + 2 H(+) = D-ribulose 1,5-bisphosphate + CO2 + H2O. It carries out the reaction D-ribulose 1,5-bisphosphate + O2 = 2-phosphoglycolate + (2R)-3-phosphoglycerate + 2 H(+). Its function is as follows. RuBisCO catalyzes two reactions: the carboxylation of D-ribulose 1,5-bisphosphate, the primary event in carbon dioxide fixation, as well as the oxidative fragmentation of the pentose substrate in the photorespiration process. Both reactions occur simultaneously and in competition at the same active site. In Flaveria bidentis (Coastal plain yellowtops), this protein is Ribulose bisphosphate carboxylase large chain.